Here is a 205-residue protein sequence, read N- to C-terminus: uncharacterized protein (205 aa).

This sequence belongs to the IIV-6 170L family.

This is an uncharacterized protein from Invertebrate iridescent virus 3 (IIV-3).